The sequence spans 193 residues: Peptidyl-tRNA hydrolase (193 aa).

TRNA is bound at residue Y18. The active-site Proton acceptor is H23. F69, N71, and N117 together coordinate tRNA.

The protein belongs to the PTH family. As to quaternary structure, monomer.

The protein localises to the cytoplasm. It carries out the reaction an N-acyl-L-alpha-aminoacyl-tRNA + H2O = an N-acyl-L-amino acid + a tRNA + H(+). Its function is as follows. Hydrolyzes ribosome-free peptidyl-tRNAs (with 1 or more amino acids incorporated), which drop off the ribosome during protein synthesis, or as a result of ribosome stalling. In terms of biological role, catalyzes the release of premature peptidyl moieties from peptidyl-tRNA molecules trapped in stalled 50S ribosomal subunits, and thus maintains levels of free tRNAs and 50S ribosomes. The polypeptide is Peptidyl-tRNA hydrolase (Teredinibacter turnerae (strain ATCC 39867 / T7901)).